Here is a 283-residue protein sequence, read N- to C-terminus: Bifunctional protein FolD 1 (283 aa).

Residues glycine 166–serine 168 and isoleucine 232 each bind NADP(+).

The protein belongs to the tetrahydrofolate dehydrogenase/cyclohydrolase family. Homodimer.

The enzyme catalyses (6R)-5,10-methylene-5,6,7,8-tetrahydrofolate + NADP(+) = (6R)-5,10-methenyltetrahydrofolate + NADPH. It catalyses the reaction (6R)-5,10-methenyltetrahydrofolate + H2O = (6R)-10-formyltetrahydrofolate + H(+). Its pathway is one-carbon metabolism; tetrahydrofolate interconversion. Its function is as follows. Catalyzes the oxidation of 5,10-methylenetetrahydrofolate to 5,10-methenyltetrahydrofolate and then the hydrolysis of 5,10-methenyltetrahydrofolate to 10-formyltetrahydrofolate. The chain is Bifunctional protein FolD 1 from Lactobacillus johnsonii (strain CNCM I-12250 / La1 / NCC 533).